The primary structure comprises 222 residues: Protein MKS1 (222 aa).

Residues 1–61 form a disordered region; the sequence is MDPSEYFAGG…PNRDQPPPYI (61 aa). A compositionally biased stretch (polar residues) spans 12–21; the sequence is PSDQQNQKRQ. Phosphoserine is present on Ser-30. Residues 37–46 are compositionally biased toward basic residues; that stretch reads DSHKIKKPPK. The segment covering 47–61 has biased composition (pro residues); it reads HPAPPPNRDQPPPYI. A Phosphoserine modification is found at Ser-72. Positions 83–92 match the VQ motif; sequence FMNVVQRLTG. Residues 105–130 are disordered; sequence GDVSPAARLASTENASPRGGKEPAAR. Ser-108 and Ser-120 each carry phosphoserine.

In terms of assembly, interacts with MPK4, WRKY25 and WRKY33. Post-translationally, phosphorylated on serine residue by MPK4.

The protein localises to the nucleus. In terms of biological role, regulator of plant defense response. May contribute to MPK4-regulated defense activation by coupling the kinase to specific WRKY transcription factors. The sequence is that of Protein MKS1 (MKS1) from Arabidopsis thaliana (Mouse-ear cress).